A 375-amino-acid polypeptide reads, in one-letter code: Alanine racemase (375 aa).

Residue K35 is the Proton acceptor; specific for D-alanine of the active site. Position 35 is an N6-(pyridoxal phosphate)lysine (K35). Substrate is bound at residue R133. The Proton acceptor; specific for L-alanine role is filled by Y261. Residue M309 participates in substrate binding.

Belongs to the alanine racemase family. The cofactor is pyridoxal 5'-phosphate.

It carries out the reaction L-alanine = D-alanine. Its pathway is amino-acid biosynthesis; D-alanine biosynthesis; D-alanine from L-alanine: step 1/1. In terms of biological role, catalyzes the interconversion of L-alanine and D-alanine. May also act on other amino acids. The sequence is that of Alanine racemase (alr) from Syntrophobacter fumaroxidans (strain DSM 10017 / MPOB).